The chain runs to 521 residues: MALMILPFIGSVSVSESLVALTAVCLVYLILKFFRTEIPAGLRQLPGPKPLPIIGNVLEVGSKPHLSLTAMSKRYGDVFQIQIGMRPVVVLSGSETVRQALIKQGDEFSGRPDLYSFTFINDGKSLAFSTDQAGVCGACRKLAYSALRSFSTLDGTTPEYSCMLEEHICKEGECLINQLNTVMKADGSFDPFRHIVVSVANVICGMCFGRRYDHNDQDLLRLVNLSDEFGQVAGSGNPADFINILRFLPSTTMKKFMTINADFNTFVKKIVGEHYATFDKNNIRDITDSLIDHCEDRKLDENCNVQMSDEKIVGIVNDLFGAGFDTVSTALSWSVMYLVAYPDIQERLFQEIKDNVGLDRTPLLSDRSKVPYLEAFILELFRHSSFLPFTIPHCSAKDTSLNGYFIPKDTCVFINQWQINRDPELWKDPSSFNPDRFLSCNGTEVNKQEGEKVMVFGMGKRRCIGEVIARNEVYRGLAILIQRLQFHEMPGELLDMTPEYGLTMKHKRCHLRATMRARNEQ.

A substrate-binding site is contributed by Phe229. Residue Cys463 participates in heme binding.

This sequence belongs to the cytochrome P450 family. It depends on heme as a cofactor.

It is found in the endoplasmic reticulum membrane. It localises to the microsome membrane. It carries out the reaction an organic molecule + reduced [NADPH--hemoprotein reductase] + O2 = an alcohol + oxidized [NADPH--hemoprotein reductase] + H2O + H(+). Functionally, cytochromes P450 are a group of heme-thiolate monooxygenases. They oxidize a variety of structurally unrelated compounds, including steroids, fatty acids, and xenobiotics. The protein is Cytochrome P450 1A1 (cyp1a1) of Chaetodon capistratus (Four-eye butterflyfish).